A 231-amino-acid chain; its full sequence is uncharacterized protein (231 aa).

Residues 43 to 76 (YKVKVDLDNNYFGLCTCQYKYNCKHAYALIEAYE) form an SWIM-type zinc finger.

This is an uncharacterized protein from Methanocaldococcus jannaschii (strain ATCC 43067 / DSM 2661 / JAL-1 / JCM 10045 / NBRC 100440) (Methanococcus jannaschii).